The primary structure comprises 481 residues: Aspartyl/glutamyl-tRNA(Asn/Gln) amidotransferase subunit B (481 aa).

This sequence belongs to the GatB/GatE family. GatB subfamily. Heterotrimer of A, B and C subunits.

The enzyme catalyses L-glutamyl-tRNA(Gln) + L-glutamine + ATP + H2O = L-glutaminyl-tRNA(Gln) + L-glutamate + ADP + phosphate + H(+). It catalyses the reaction L-aspartyl-tRNA(Asn) + L-glutamine + ATP + H2O = L-asparaginyl-tRNA(Asn) + L-glutamate + ADP + phosphate + 2 H(+). Its function is as follows. Allows the formation of correctly charged Asn-tRNA(Asn) or Gln-tRNA(Gln) through the transamidation of misacylated Asp-tRNA(Asn) or Glu-tRNA(Gln) in organisms which lack either or both of asparaginyl-tRNA or glutaminyl-tRNA synthetases. The reaction takes place in the presence of glutamine and ATP through an activated phospho-Asp-tRNA(Asn) or phospho-Glu-tRNA(Gln). In Ehrlichia chaffeensis (strain ATCC CRL-10679 / Arkansas), this protein is Aspartyl/glutamyl-tRNA(Asn/Gln) amidotransferase subunit B.